Reading from the N-terminus, the 318-residue chain is Probable pyridoxal 5'-phosphate synthase subunit PDX1.1 (318 aa).

D49 is a binding site for D-ribose 5-phosphate. The active-site Schiff-base intermediate with D-ribose 5-phosphate is the K106. Residue G178 coordinates D-ribose 5-phosphate. R190 contributes to the D-glyceraldehyde 3-phosphate binding site. D-ribose 5-phosphate contacts are provided by residues G239 and 260-261; that span reads GS.

This sequence belongs to the PdxS/SNZ family.

The enzyme catalyses aldehydo-D-ribose 5-phosphate + D-glyceraldehyde 3-phosphate + L-glutamine = pyridoxal 5'-phosphate + L-glutamate + phosphate + 3 H2O + H(+). The protein operates within cofactor biosynthesis; pyridoxal 5'-phosphate biosynthesis. Its function is as follows. Catalyzes the formation of pyridoxal 5'-phosphate from ribose 5-phosphate (RBP), glyceraldehyde 3-phosphate (G3P) and ammonia. The ammonia is provided by PDX2. Can also use ribulose 5-phosphate and dihydroxyacetone phosphate as substrates, resulting from enzyme-catalyzed isomerization of RBP and G3P, respectively. Also plays an indirect role in resistance to singlet oxygen-generating photosensitizers. The chain is Probable pyridoxal 5'-phosphate synthase subunit PDX1.1 (PDX11) from Oryza sativa subsp. japonica (Rice).